Consider the following 374-residue polypeptide: Beta-lytic metalloendopeptidase (374 aa).

Residues 1–24 (MKKISKAGLGLALVCALATIGGNA) form the signal peptide. Positions 25–195 (ARRATAQRRG…RQGRPGRAAV (171 aa)) are excised as a propeptide. The segment at 128-187 (PTRQGAGDAGPRQSAAGAVRAFRRQRAGGRAARRRRVPAGLRPPVQRTAPGQGGFGPLRQ) is disordered. Residues 148 to 164 (AFRRQRAGGRAARRRRV) are compositionally biased toward basic residues. A disulfide bridge connects residues Cys261 and Cys307. 2 residues coordinate Zn(2+): His316 and His318. Cys351 and Cys364 form a disulfide bridge.

The protein belongs to the peptidase M23A family. The cofactor is Zn(2+).

The protein localises to the secreted. The catalysed reaction is Cleavage of N-acetylmuramoyl-|-Ala, and of the insulin B chain at 23-Gly-|-Phe-24 &gt; 18-Val-|-Cys(SO3H).. The polypeptide is Beta-lytic metalloendopeptidase (Achromobacter lyticus).